The primary structure comprises 304 residues: N-carbamoyl-D-amino acid hydrolase (304 aa).

Positions 5 to 276 (MILAVGQQGP…DEVITAAVDL (272 aa)) constitute a CN hydrolase domain. Residues glutamate 47, lysine 127, and cysteine 172 contribute to the active site.

As to quaternary structure, homotetramer.

The enzyme catalyses an N-carbamoyl-D-amino acid + H2O + 2 H(+) = a D-alpha-amino acid + NH4(+) + CO2. Functionally, the enzyme catalyzes the hydrolysis of N-carbamoyl-D-amino acids to the corresponding which are useful intermediates in the preparation of beta-lactam antibiotics. Industrial production of beta-lactam antibiotics is now being developed using this enzyme. This Rhizobium radiobacter (Agrobacterium tumefaciens) protein is N-carbamoyl-D-amino acid hydrolase.